The following is a 524-amino-acid chain: 12S seed storage protein CRC (524 aa).

An N-terminal signal peptide occupies residues 1-23 (MVKLSNLLVATFGVLLVLNGCLA). The cysteines at positions 37 and 70 are disulfide-linked. Cupin type-1 domains lie at 42–289 (LDVL…QLAQ) and 346–495 (ENID…EEAR). Ser53 carries the phosphoserine modification. A Phosphotyrosine modification is found at Tyr78. A Phosphoserine modification is found at Ser97. An intrachain disulfide couples Cys113 to Cys340. Position 116 is a phosphothreonine (Thr116). The tract at residues 119-190 (DSQPMQGQQQ…QGQQGQQGFR (72 aa)) is disordered. A compositionally biased stretch (low complexity) spans 124–188 (QGQQQGQPWQ…EGQGQQGQQG (65 aa)). Residues Ser259 and Ser366 each carry the phosphoserine modification. Thr459 bears the Phosphothreonine mark. A Phosphoserine modification is found at Ser484. Thr501 bears the Phosphothreonine mark.

This sequence belongs to the 11S seed storage protein (globulins) family. In terms of assembly, hexamer; each subunit is composed of an acidic and a basic chain derived from a single precursor and linked by a disulfide bond. Post-translationally, proteolytically processed during seed maturation at a conserved Asn-Gly peptide bond by an asparaginyl endopeptidase to produce two mature polypeptides referred to as alpha and beta subunits that are joined together by a disulfide bond. Phosphorylated in seeds on some Tyr residues in response to abscisic acid (ABA). Accumulates in seeds 8 days after anthesis.

It is found in the protein storage vacuole. Seed storage protein. The sequence is that of 12S seed storage protein CRC (CRC) from Arabidopsis thaliana (Mouse-ear cress).